The primary structure comprises 806 residues: Enhancer of polycomb-like protein 1 (806 aa).

Disordered regions lie at residues 403–461 and 751–806; these read AITS…QEIG and SLQQ…NAAA. The span at 411 to 420 shows a compositional bias: basic residues; sequence KRAKSSKSSK. The segment covering 421-439 has biased composition (basic and acidic residues); that stretch reads LHKEDSGLYADEKGSEPKK. A compositionally biased stretch (low complexity) spans 751-779; sequence SLQQQQMLQKGQQPINNAPHSQSSSPPSH. Residues 785 to 795 are compositionally biased toward polar residues; sequence NPGSTPNQSSP.

Belongs to the enhancer of polycomb family. As to quaternary structure, component of the NuA4 histone acetyltransferase complex.

The protein resides in the nucleus. In terms of biological role, component of the NuA4 histone acetyltransferase complex which is involved in transcriptional activation of selected genes principally by acetylation of nucleosomal histone H4 and H2A. The NuA4 complex is also involved in DNA repair. Involved in gene silencing by neighboring heterochromatin, blockage of the silencing spreading along the chromosome, and required for cell cycle progression through G2/M. The sequence is that of Enhancer of polycomb-like protein 1 (EPL1) from Kluyveromyces lactis (strain ATCC 8585 / CBS 2359 / DSM 70799 / NBRC 1267 / NRRL Y-1140 / WM37) (Yeast).